The following is a 94-amino-acid chain: Phormicin (94 aa).

Residues methionine 1 to alanine 23 form the signal peptide. The propeptide occupies isoleucine 24 to arginine 54. Cystine bridges form between cysteine 57–cysteine 84, cysteine 70–cysteine 90, and cysteine 74–cysteine 92.

This sequence belongs to the invertebrate defensin family. Type 1 subfamily.

The protein resides in the secreted. Its function is as follows. Responsible for the anti Gram-positive activity of immune hemolymph of P.terraenovae. This is Phormicin from Protophormia terraenovae (Northern blowfly).